A 237-amino-acid polypeptide reads, in one-letter code: Urease accessory protein UreF (237 aa).

This sequence belongs to the UreF family. In terms of assembly, ureD, UreF and UreG form a complex that acts as a GTP-hydrolysis-dependent molecular chaperone, activating the urease apoprotein by helping to assemble the nickel containing metallocenter of UreC. The UreE protein probably delivers the nickel.

It is found in the cytoplasm. Required for maturation of urease via the functional incorporation of the urease nickel metallocenter. This chain is Urease accessory protein UreF, found in Rhodopseudomonas palustris (strain HaA2).